A 273-amino-acid polypeptide reads, in one-letter code: Glutamate 5-kinase (273 aa).

ATP is bound at residue K15. 3 residues coordinate substrate: S55, D142, and N158. ATP-binding positions include 178-179 and 220-226; these read SD and TGGMLSK.

It belongs to the glutamate 5-kinase family.

It localises to the cytoplasm. It catalyses the reaction L-glutamate + ATP = L-glutamyl 5-phosphate + ADP. The protein operates within amino-acid biosynthesis; L-proline biosynthesis; L-glutamate 5-semialdehyde from L-glutamate: step 1/2. Functionally, catalyzes the transfer of a phosphate group to glutamate to form L-glutamate 5-phosphate. The chain is Glutamate 5-kinase from Streptococcus pyogenes serotype M4 (strain MGAS10750).